The sequence spans 245 residues: 1-(5-phosphoribosyl)-5-[(5-phosphoribosylamino)methylideneamino] imidazole-4-carboxamide isomerase (245 aa).

Asp7 (proton acceptor) is an active-site residue. Catalysis depends on Asp129, which acts as the Proton donor.

Belongs to the HisA/HisF family.

The protein resides in the cytoplasm. It carries out the reaction 1-(5-phospho-beta-D-ribosyl)-5-[(5-phospho-beta-D-ribosylamino)methylideneamino]imidazole-4-carboxamide = 5-[(5-phospho-1-deoxy-D-ribulos-1-ylimino)methylamino]-1-(5-phospho-beta-D-ribosyl)imidazole-4-carboxamide. Its pathway is amino-acid biosynthesis; L-histidine biosynthesis; L-histidine from 5-phospho-alpha-D-ribose 1-diphosphate: step 4/9. This chain is 1-(5-phosphoribosyl)-5-[(5-phosphoribosylamino)methylideneamino] imidazole-4-carboxamide isomerase, found in Shewanella putrefaciens (strain CN-32 / ATCC BAA-453).